Consider the following 192-residue polypeptide: NAD(P)H-quinone oxidoreductase subunit J, organellar chromatophore (192 aa).

It belongs to the complex I 30 kDa subunit family. In terms of assembly, NDH is composed of at least 16 different subunits, 5 of which are encoded in the nucleus.

It localises to the plastid. The protein localises to the organellar chromatophore thylakoid membrane. It carries out the reaction a quinone + NADH + H(+) = a quinol + NAD(+). Its function is as follows. NDH-1 shuttles electrons from NADH, via FMN and iron-sulfur (Fe-S) centers, to quinones in the respiratory chain. Couples the redox reaction to proton translocation (for every two electrons transferred, four hydrogen ions are translocated across the cytoplasmic membrane), and thus conserves the redox energy in a proton gradient. The chain is NAD(P)H-quinone oxidoreductase subunit J, organellar chromatophore from Paulinella chromatophora.